The primary structure comprises 148 residues: Large ribosomal subunit protein bL27m (148 aa).

A mitochondrion-targeting transit peptide spans 1-30 (MAAAALTLRTRAAVTALLSPTAPTALAVRH). A disordered region spans residues 28 to 48 (VRHASKKTGGSSKNLGGKSRG).

It belongs to the bacterial ribosomal protein bL27 family. As to quaternary structure, component of the mitochondrial ribosome large subunit (39S) which comprises a 16S rRNA and about 50 distinct proteins.

Its subcellular location is the mitochondrion. The polypeptide is Large ribosomal subunit protein bL27m (Mrpl27) (Mus musculus (Mouse)).